Here is a 167-residue protein sequence, read N- to C-terminus: Phosphopantetheine adenylyltransferase (167 aa).

Serine 8 is a binding site for substrate. ATP contacts are provided by residues 8–9 and histidine 16; that span reads SF. Residues lysine 40, leucine 74, and arginine 88 each coordinate substrate. ATP contacts are provided by residues 89-91, glutamate 99, and 123-129; these read GLR and WSFVSSS.

The protein belongs to the bacterial CoaD family. In terms of assembly, homohexamer. Requires Mg(2+) as cofactor.

The protein resides in the cytoplasm. The catalysed reaction is (R)-4'-phosphopantetheine + ATP + H(+) = 3'-dephospho-CoA + diphosphate. It functions in the pathway cofactor biosynthesis; coenzyme A biosynthesis; CoA from (R)-pantothenate: step 4/5. Functionally, reversibly transfers an adenylyl group from ATP to 4'-phosphopantetheine, yielding dephospho-CoA (dPCoA) and pyrophosphate. This chain is Phosphopantetheine adenylyltransferase, found in Deinococcus radiodurans (strain ATCC 13939 / DSM 20539 / JCM 16871 / CCUG 27074 / LMG 4051 / NBRC 15346 / NCIMB 9279 / VKM B-1422 / R1).